Consider the following 297-residue polypeptide: MDFLINKKLKIFITLMETGSFSIATSVLYITRTPLSRVISGLERELKQRLFIRKNGTLIPTEFAQTIYRKVKSHYIFLHALEQEIGPTGKTKQLEIIFDEIYPESLKNLIISALTISGQKTNIMGRAVNSQIIEELCQTNNCIVISARNYFHRESLVCRTSVEGGVMLFIPKKFFLCGKPDINRLAGTPVLFHEGAKNFNLDTIYHFFEQTLGITNPAFSFDNVDLFSSLYRLQQGLAMLLIPVRVCRALGLSTDHALHIKGVALCTSLYYPTKKRETPDYRKAIKLIQQELKQSTF.

The HTH lysR-type domain occupies 1-61 (MDFLINKKLK…IRKNGTLIPT (61 aa)). A DNA-binding region (H-T-H motif) is located at residues 21–40 (FSIATSVLYITRTPLSRVIS).

It belongs to the LysR transcriptional regulatory family.

Its subcellular location is the cytoplasm. In terms of biological role, positive regulator for the plasmid-encoded virulence factors SpvA, SpvB, and SpvC. The polypeptide is Virulence genes transcriptional activator SpvR (spvR) (Salmonella dublin).